The chain runs to 249 residues: tRNA (guanine-N(1)-)-methyltransferase (249 aa).

S-adenosyl-L-methionine is bound by residues glycine 121 and 141–146; that span reads LGDFVL.

This sequence belongs to the RNA methyltransferase TrmD family. In terms of assembly, homodimer.

It localises to the cytoplasm. The enzyme catalyses guanosine(37) in tRNA + S-adenosyl-L-methionine = N(1)-methylguanosine(37) in tRNA + S-adenosyl-L-homocysteine + H(+). Functionally, specifically methylates guanosine-37 in various tRNAs. The chain is tRNA (guanine-N(1)-)-methyltransferase from Cereibacter sphaeroides (strain KD131 / KCTC 12085) (Rhodobacter sphaeroides).